We begin with the raw amino-acid sequence, 112 residues long: MSNRSITLLQRVDNATEQLNSKFTDIVNSAKVSSKDKSALAMETYLVEESTSAMVRSLEDLLFVTRSLKEAWILGQIRPVVNKPEDGGEGQLADELLDKIEDTSDGVDKETA.

A disordered region spans residues 83–112; sequence KPEDGGEGQLADELLDKIEDTSDGVDKETA. The segment covering 96–112 has biased composition (basic and acidic residues); the sequence is LLDKIEDTSDGVDKETA.

This sequence belongs to the Mediator complex subunit 22 family. As to quaternary structure, component of the Mediator complex.

Its subcellular location is the nucleus. Its function is as follows. Component of the Mediator complex, a coactivator involved in the regulated transcription of nearly all RNA polymerase II-dependent genes. Mediator functions as a bridge to convey information from gene-specific regulatory proteins to the basal RNA polymerase II transcription machinery. Mediator is recruited to promoters by direct interactions with regulatory proteins and serves as a scaffold for the assembly of a functional preinitiation complex with RNA polymerase II and the general transcription factors. This Yarrowia lipolytica (strain CLIB 122 / E 150) (Yeast) protein is Mediator of RNA polymerase II transcription subunit 22 (SRB6).